The chain runs to 219 residues: ATP synthase protein MI25 (219 aa).

The helical transmembrane segment at 29–49 (ISIYNEEMIVARCFIGFLILS) threads the bilayer.

Belongs to the ATPase protein MI25 family. In terms of assembly, F-type ATPases have 2 components, CF(1) - the catalytic core - and CF(0) - the membrane proton channel. CF(1) has five subunits: alpha(3), beta(3), gamma(1), delta(1), epsilon(1). CF(0) has three main subunits: a, b and c.

It localises to the mitochondrion membrane. Functionally, this is one of the chains of the nonenzymatic component (CF(0) subunit) of the mitochondrial ATPase complex. This is ATP synthase protein MI25 from Zea mays (Maize).